Reading from the N-terminus, the 334-residue chain is Tryptophan--tRNA ligase (334 aa).

ATP contacts are provided by residues 11–13 (QPS) and 19–20 (GN). Residues 12–20 (PSGELTIGN) carry the 'HIGH' region motif. Aspartate 135 provides a ligand contact to L-tryptophan. Residues 147 to 149 (GED), valine 186, and 195 to 199 (KMSKS) contribute to the ATP site. The short motif at 195–199 (KMSKS) is the 'KMSKS' region element.

This sequence belongs to the class-I aminoacyl-tRNA synthetase family. In terms of assembly, homodimer.

Its subcellular location is the cytoplasm. The enzyme catalyses tRNA(Trp) + L-tryptophan + ATP = L-tryptophyl-tRNA(Trp) + AMP + diphosphate + H(+). Its function is as follows. Catalyzes the attachment of tryptophan to tRNA(Trp). The sequence is that of Tryptophan--tRNA ligase from Shigella flexneri.